A 266-amino-acid polypeptide reads, in one-letter code: 3-deoxy-manno-octulosonate cytidylyltransferase (266 aa).

It belongs to the KdsB family.

The protein localises to the cytoplasm. It carries out the reaction 3-deoxy-alpha-D-manno-oct-2-ulosonate + CTP = CMP-3-deoxy-beta-D-manno-octulosonate + diphosphate. Its pathway is nucleotide-sugar biosynthesis; CMP-3-deoxy-D-manno-octulosonate biosynthesis; CMP-3-deoxy-D-manno-octulosonate from 3-deoxy-D-manno-octulosonate and CTP: step 1/1. The protein operates within bacterial outer membrane biogenesis; lipopolysaccharide biosynthesis. Functionally, activates KDO (a required 8-carbon sugar) for incorporation into bacterial lipopolysaccharide in Gram-negative bacteria. The sequence is that of 3-deoxy-manno-octulosonate cytidylyltransferase from Paraburkholderia xenovorans (strain LB400).